A 263-amino-acid chain; its full sequence is Small ribosomal subunit protein uS3 (263 aa).

The 69-residue stretch at 39–107 (VREYLKKKLK…PVHVNIEEIR (69 aa)) folds into the KH type-2 domain. Residues 211–263 (GELPPEAATPREEERRPRRAPRGDRPDGGRPGRPGGRGRGPRKADAAPAPEGE) form a disordered region. Over residues 219 to 240 (TPREEERRPRRAPRGDRPDGGR) the composition is skewed to basic and acidic residues.

Belongs to the universal ribosomal protein uS3 family. As to quaternary structure, part of the 30S ribosomal subunit. Forms a tight complex with proteins S10 and S14.

Its function is as follows. Binds the lower part of the 30S subunit head. Binds mRNA in the 70S ribosome, positioning it for translation. The polypeptide is Small ribosomal subunit protein uS3 (Bordetella petrii (strain ATCC BAA-461 / DSM 12804 / CCUG 43448)).